The chain runs to 186 residues: UPF0301 protein Daro_3893 (186 aa).

Belongs to the UPF0301 (AlgH) family.

The sequence is that of UPF0301 protein Daro_3893 from Dechloromonas aromatica (strain RCB).